A 330-amino-acid chain; its full sequence is MARMYYDADANLDLLNGKTVAIIGYGSQGHAHALNLRDSGVNVVVGLYPGSKSAAKAEAEGLKVLPVAEAAQAADWIMILLPDEFQKSVFENEIRPALSAGKVLAFAHGFNIHFAQIVPPADVDVVMIAPKSPGHLVRRTYEQGQGVPCLFAIYQDASGQARDRAMAYAKGIGGTRAGILETSFREETETDLFGEQAVLCGGLSALIKAGFETLVEAGYQPELAYFECLHEVKLIVDLIVEGGLAAMRDSISNTAEYGDYVTGPRLITEETKAEMKRVLADIQQGRFALDFVQECGAGKPVMTATRRLEAEHPIESVGKDLRAMFSWLKK.

A KARI N-terminal Rossmann domain is found at 2–182 (ARMYYDADAN…GGTRAGILET (181 aa)). Residues 25–28 (YGSQ), Ser51, Ser53, and 83–86 (DEFQ) each bind NADP(+). His108 is a catalytic residue. NADP(+) is bound at residue Gly134. In terms of domain architecture, KARI C-terminal knotted spans 183–328 (SFREETETDL…KDLRAMFSWL (146 aa)). Residues Asp191, Glu195, Glu227, and Glu231 each contribute to the Mg(2+) site. Ser252 lines the substrate pocket.

This sequence belongs to the ketol-acid reductoisomerase family. Requires Mg(2+) as cofactor.

The enzyme catalyses (2R)-2,3-dihydroxy-3-methylbutanoate + NADP(+) = (2S)-2-acetolactate + NADPH + H(+). It catalyses the reaction (2R,3R)-2,3-dihydroxy-3-methylpentanoate + NADP(+) = (S)-2-ethyl-2-hydroxy-3-oxobutanoate + NADPH + H(+). It participates in amino-acid biosynthesis; L-isoleucine biosynthesis; L-isoleucine from 2-oxobutanoate: step 2/4. Its pathway is amino-acid biosynthesis; L-valine biosynthesis; L-valine from pyruvate: step 2/4. Its function is as follows. Involved in the biosynthesis of branched-chain amino acids (BCAA). Catalyzes an alkyl-migration followed by a ketol-acid reduction of (S)-2-acetolactate (S2AL) to yield (R)-2,3-dihydroxy-isovalerate. In the isomerase reaction, S2AL is rearranged via a Mg-dependent methyl migration to produce 3-hydroxy-3-methyl-2-ketobutyrate (HMKB). In the reductase reaction, this 2-ketoacid undergoes a metal-dependent reduction by NADPH to yield (R)-2,3-dihydroxy-isovalerate. This chain is Ketol-acid reductoisomerase (NADP(+)), found in Synechococcus elongatus (strain ATCC 33912 / PCC 7942 / FACHB-805) (Anacystis nidulans R2).